A 325-amino-acid chain; its full sequence is Olfactory receptor 5H6 (325 aa).

The Extracellular segment spans residues Met1–Ile41. The N-linked (GlcNAc...) asparagine glycan is linked to Asn21. A helical membrane pass occupies residues Pro42–Ile62. Topologically, residues Val63–His70 are cytoplasmic. The helical transmembrane segment at Leu71–Ser91 threads the bilayer. Topologically, residues Thr92–Val115 are extracellular. Cys113 and Cys205 are oxidised to a cystine. Residues Gln116 to Tyr136 traverse the membrane as a helical segment. At Asp137–Glu155 the chain is on the cytoplasmic side. The chain crosses the membrane as a helical span at residues Leu156–Glu176. Residues Ala177 to Phe212 lie on the Extracellular side of the membrane. Residues Leu213–Ser233 form a helical membrane-spanning segment. Residues Tyr234–Ala253 are Cytoplasmic-facing. A helical transmembrane segment spans residues Val254–Lys274. Topologically, residues Tyr275–Asp287 are extracellular. Residues Met288–Leu308 form a helical membrane-spanning segment. The Cytoplasmic portion of the chain corresponds to Arg309–Val325.

It belongs to the G-protein coupled receptor 1 family.

The protein resides in the cell membrane. Functionally, odorant receptor. This is Olfactory receptor 5H6 (OR5H6) from Homo sapiens (Human).